The primary structure comprises 215 residues: 7-cyano-7-deazaguanine synthase (215 aa).

8–18 contacts ATP; that stretch reads LSAGLDSTVSL. Zn(2+)-binding residues include C191, C199, C202, and C205.

It belongs to the QueC family. Homodimer. The cofactor is Zn(2+).

The enzyme catalyses 7-carboxy-7-deazaguanine + NH4(+) + ATP = 7-cyano-7-deazaguanine + ADP + phosphate + H2O + H(+). It functions in the pathway purine metabolism; 7-cyano-7-deazaguanine biosynthesis. In terms of biological role, catalyzes the ATP-dependent conversion of 7-carboxy-7-deazaguanine (CDG) to 7-cyano-7-deazaguanine (preQ(0)). The polypeptide is 7-cyano-7-deazaguanine synthase (Carboxydothermus hydrogenoformans (strain ATCC BAA-161 / DSM 6008 / Z-2901)).